A 1119-amino-acid chain; its full sequence is DNA-directed RNA polymerase subunit beta (1119 aa).

This sequence belongs to the RNA polymerase beta chain family. In terms of assembly, the RNAP catalytic core consists of 2 alpha, 1 beta, 1 beta' and 1 omega subunit. When a sigma factor is associated with the core the holoenzyme is formed, which can initiate transcription.

It catalyses the reaction RNA(n) + a ribonucleoside 5'-triphosphate = RNA(n+1) + diphosphate. In terms of biological role, DNA-dependent RNA polymerase catalyzes the transcription of DNA into RNA using the four ribonucleoside triphosphates as substrates. The sequence is that of DNA-directed RNA polymerase subunit beta from Thermus aquaticus.